The chain runs to 167 residues: Translationally-controlled tumor protein homolog (167 aa).

The TCTP domain maps to 1–167 (MLIFEDVISG…WKHGVKENKI (167 aa)).

It belongs to the TCTP family.

It is found in the cytoplasm. The protein localises to the cytoskeleton. Involved in protein synthesis. Involved in microtubule stabilization. The chain is Translationally-controlled tumor protein homolog (TMA19) from Candida albicans (strain SC5314 / ATCC MYA-2876) (Yeast).